Reading from the N-terminus, the 94-residue chain is Small ribosomal subunit protein uS19 (94 aa).

It belongs to the universal ribosomal protein uS19 family.

Protein S19 forms a complex with S13 that binds strongly to the 16S ribosomal RNA. The sequence is that of Small ribosomal subunit protein uS19 from Hamiltonella defensa subsp. Acyrthosiphon pisum (strain 5AT).